The sequence spans 151 residues: Putative pre-16S rRNA nuclease (151 aa).

This sequence belongs to the YqgF nuclease family.

The protein localises to the cytoplasm. Functionally, could be a nuclease involved in processing of the 5'-end of pre-16S rRNA. The protein is Putative pre-16S rRNA nuclease of Nitrosospira multiformis (strain ATCC 25196 / NCIMB 11849 / C 71).